The following is a 135-amino-acid chain: Class I hydrophobin 2 (135 aa).

Positions 1–20 (MFARLTSTLFALAAVSAVFA) are cleaved as a signal peptide. 4 cysteine pairs are disulfide-bonded: Cys29–Cys114, Cys36–Cys107, Cys37–Cys73, and Cys115–Cys128. 2 N-linked (GlcNAc...) asparagine glycosylation sites follow: Asn117 and Asn132.

The protein belongs to the fungal hydrophobin family. Self-assembles to form functional amyloid fibrils called rodlets. Self-assembly into fibrillar rodlets occurs spontaneously at hydrophobic:hydrophilic interfaces and the rodlets further associate laterally to form amphipathic monolayers.

The protein resides in the secreted. It is found in the cell wall. In terms of biological role, aerial growth, conidiation, and dispersal of filamentous fungi in the environment rely upon a capability of their secreting small amphipathic proteins called hydrophobins (HPBs) with low sequence identity. Class I can self-assemble into an outermost layer of rodlet bundles on aerial cell surfaces, conferring cellular hydrophobicity that supports fungal growth, development and dispersal; whereas Class II form highly ordered films at water-air interfaces through intermolecular interactions but contribute nothing to the rodlet structure. This is Class I hydrophobin 2 from Coprinopsis cinerea (strain Okayama-7 / 130 / ATCC MYA-4618 / FGSC 9003) (Inky cap fungus).